The primary structure comprises 186 residues: Ribosome-recycling factor (186 aa).

The protein belongs to the RRF family.

The protein resides in the cytoplasm. In terms of biological role, responsible for the release of ribosomes from messenger RNA at the termination of protein biosynthesis. May increase the efficiency of translation by recycling ribosomes from one round of translation to another. The chain is Ribosome-recycling factor from Brucella melitensis biotype 2 (strain ATCC 23457).